Consider the following 254-residue polypeptide: Alcohol dehydrogenase (254 aa).

10-33 (FVAGLGGIGLDTSREIVKSGPKNL) lines the NAD(+) pocket. S138 is a substrate binding site. The active-site Proton acceptor is the Y151.

This sequence belongs to the short-chain dehydrogenases/reductases (SDR) family. As to quaternary structure, homodimer.

The enzyme catalyses a primary alcohol + NAD(+) = an aldehyde + NADH + H(+). The catalysed reaction is a secondary alcohol + NAD(+) = a ketone + NADH + H(+). In Drosophila flavomontana (Fruit fly), this protein is Alcohol dehydrogenase (Adh).